The primary structure comprises 377 residues: Phosphatidylglycerol--prolipoprotein diacylglyceryl transferase (377 aa).

Transmembrane regions (helical) follow at residues 18–38, 48–68, 93–113, and 119–139; these read PVPLRAYALMIIIGIVVAVVV, MDPALAGEIAYWAVPFGIVGA, IWNGGLGIWGAIAGGALGAWL, and GISLALFADAAAPGIILAQAI. Arg141 contributes to the a 1,2-diacyl-sn-glycero-3-phospho-(1'-sn-glycerol) binding site. Helical transmembrane passes span 177–197, 208–228, and 238–258; these read QPTFLYEFLWNLVVAAILLLV, LFALYVALYTFGRLWIEMLRI, and RVNIWTSAIVCVGAVVALLVV. The disordered stretch occupies residues 265 to 377; sequence DVSPQEQRAL…RTRVERPPAT (113 aa). Low complexity-rich tracts occupy residues 288–297 and 308–344; these read AAGETAGETR and GVDVNGADVDGADPSNVNGANVNGADPVNVNVNDADG.

It belongs to the Lgt family.

The protein localises to the cell membrane. It catalyses the reaction L-cysteinyl-[prolipoprotein] + a 1,2-diacyl-sn-glycero-3-phospho-(1'-sn-glycerol) = an S-1,2-diacyl-sn-glyceryl-L-cysteinyl-[prolipoprotein] + sn-glycerol 1-phosphate + H(+). Its pathway is protein modification; lipoprotein biosynthesis (diacylglyceryl transfer). Its function is as follows. Catalyzes the transfer of the diacylglyceryl group from phosphatidylglycerol to the sulfhydryl group of the N-terminal cysteine of a prolipoprotein, the first step in the formation of mature lipoproteins. This chain is Phosphatidylglycerol--prolipoprotein diacylglyceryl transferase, found in Frankia alni (strain DSM 45986 / CECT 9034 / ACN14a).